A 247-amino-acid polypeptide reads, in one-letter code: Protein IRON-RELATED TRANSCRIPTION FACTOR 2 (247 aa).

The short motif at His68–Ala75 is the Nuclear localization signal element. The basic motif stretch occupies residues His68 to Arg81. The bHLH domain maps to His68–Leu119. The helix-loop-helix motif stretch occupies residues Lys82 to Leu119.

It belongs to the bHLH protein family. Forms homodimers. Interacts with BHLH156 in the nucleus. As to expression, expressed constitutively at low levels in the roots. Also observed in flowers, developing seeds, embryos and vascular bundles.

It is found in the nucleus. The protein localises to the cytoplasm. In terms of biological role, transcription activator that binds to the DNA motif 5'-CACGTGG-3' in the promoter of iron (Fe) deficiency-inducible genes as well as of genes involved in iron homeostasis, thus contributing to basal tolerance to iron deficiency, iron uptake from soil and iron transport, particularly during seed maturation and germination. Promotes the accumulation of mugineic acid family phytosiderophores (MAs). Required for ethylene-mediated signaling during iron deficiency responses. Improves growth and yield, especially in calcareous soil with low iron availability. Promotes iron concentration in shoots and grain. The sequence is that of Protein IRON-RELATED TRANSCRIPTION FACTOR 2 from Oryza sativa subsp. japonica (Rice).